Reading from the N-terminus, the 366-residue chain is Zinc transporter ZIP13 (366 aa).

The Lumenal portion of the chain corresponds to 1-5 (MTKQK). Residues 6–26 (LLLNGTFSLILIVACEAQQLP) traverse the membrane as a helical segment. Over 27-57 (RSHAASSSGPLCEKEAESWGNLLSSERLDAW) the chain is Cytoplasmic. Residues 58 to 78 (ICSLIGSFMVGLSGIFPLLVI) traverse the membrane as a helical segment. Residues 79 to 97 (PFETGAALRSEAGSRRLKQ) lie on the Lumenal side of the membrane. The chain crosses the membrane as a helical span at residues 98-118 (LLSFAIGGLLGNVFLHLLPEA). The Cytoplasmic portion of the chain corresponds to 119–137 (WAYTCSAAAGEGQSFQQQK). The chain crosses the membrane as a helical span at residues 138–158 (LLGLWVIIGFLTFLALEKIFL). Residues 159–225 (EKEEEECPGV…NRIKISGYLN (67 aa)) lie on the Lumenal side of the membrane. The disordered stretch occupies residues 183-205 (SGYPPSKVAGKSQRAEKNSTQCN). The chain crosses the membrane as a helical span at residues 226 to 246 (LLANTIDNFTHGLAVAASFLV). Residues 247–282 (SRKVGFLTTMAILLHEIPHEVGDFAILLRAGFDRWS) are Cytoplasmic-facing. An XEXPHE-motif motif is present at residues 261-266 (HEIPHE). The helical transmembrane segment at 283 to 303 (AAKMQLSTALGGIVGACFAIC) threads the bilayer. Residues 304–313 (AQSPKGAGET) lie on the Lumenal side of the membrane. A helical membrane pass occupies residues 314–334 (VAWILPFTSGGFLYIALVNVV). Over 335–343 (PDLLEEKNP) the chain is Cytoplasmic. A helical membrane pass occupies residues 344 to 364 (WNSLQQILLLCTGITVMVLLA). The Lumenal portion of the chain corresponds to 365-366 (HN).

It belongs to the ZIP transporter (TC 2.A.5) family. Homodimer.

It localises to the golgi apparatus membrane. The protein resides in the cytoplasmic vesicle membrane. It is found in the endoplasmic reticulum membrane. The catalysed reaction is Zn(2+)(in) = Zn(2+)(out). Functionally, functions as a zinc transporter transporting Zn(2+) from the Golgi apparatus to the cytosol and thus influences the zinc level at least in areas of the cytosol. This chain is Zinc transporter ZIP13, found in Gallus gallus (Chicken).